Here is a 300-residue protein sequence, read N- to C-terminus: Putative S-adenosyl-L-methionine-dependent methyltransferase Mkms_0379 (300 aa).

S-adenosyl-L-methionine is bound by residues Asp-128 and 157-158; that span reads DL.

This sequence belongs to the UPF0677 family.

Its function is as follows. Exhibits S-adenosyl-L-methionine-dependent methyltransferase activity. The sequence is that of Putative S-adenosyl-L-methionine-dependent methyltransferase Mkms_0379 from Mycobacterium sp. (strain KMS).